A 387-amino-acid chain; its full sequence is Transmembrane protein 120 homolog (387 aa).

The stretch at Met1 to Gln39 forms a coiled coil. An N-linked (GlcNAc...) asparagine glycan is attached at Asn111. A run of 6 helical transmembrane segments spans residues Phe130–Tyr150, Leu155–Leu175, Phe191–Ile211, Phe216–Leu238, Gly264–Trp284, and Val302–Val322. A disordered region spans residues Arg346–Thr387. 3 positions are modified to phosphoserine: Ser352, Ser354, and Ser365. Low complexity predominate over residues Ser352–Pro381.

Belongs to the TMEM120 family.

The protein resides in the membrane. The polypeptide is Transmembrane protein 120 homolog (Drosophila melanogaster (Fruit fly)).